A 338-amino-acid chain; its full sequence is 3 beta-hydroxysteroid dehydrogenase type 7 (338 aa).

The active-site Proton acceptor is the Y159. An NAD(+)-binding site is contributed by K163. Helical transmembrane passes span 258-278 (LLPY…QWLL) and 280-300 (PLVL…NTTF).

Belongs to the 3-beta-HSD family. In terms of tissue distribution, high levels in liver and lung, moderate levels in spleen, brain, heart, kidney, jejunum and testis. Up-regulated in 3Y1 cells upon growth arrest.

Its subcellular location is the endoplasmic reticulum membrane. It carries out the reaction 7alpha-hydroxycholesterol + NAD(+) = 7alpha-hydroxycholest-4-en-3-one + NADH + H(+). The enzyme catalyses 7alpha,25-dihydroxycholesterol + NAD(+) = 7alpha,25-dihydroxy-4-cholesten-3-one + NADH + H(+). It catalyses the reaction (25R)-cholest-5-en-3beta,7alpha,26-triol + NAD(+) = (25R)-7alpha,26-dihydroxycholest-4-en-3-one + NADH + H(+). The catalysed reaction is (24S)-7alpha-dihydroxycholesterol + NAD(+) = (24S)-7alpha,24-dihydroxycholest-4-en-3-one + NADH + H(+). The protein operates within lipid metabolism; steroid biosynthesis. Functionally, the 3-beta-HSD enzymatic system plays a crucial role in the biosynthesis of all classes of hormonal steroids. HSD VII is active against four 7-alpha-hydroxylated sterols. Does not metabolize several different C(19/21) steroids as substrates. Involved in bile acid synthesis. Plays a key role in cell positioning and movement in lymphoid tissues by mediating degradation of 7-alpha,25-dihydroxycholesterol (7-alpha,25-OHC): 7-alpha,25-OHC acts as a ligand for the G protein-coupled receptor GPR183/EBI2, a chemotactic receptor for a number of lymphoid cells. In Rattus norvegicus (Rat), this protein is 3 beta-hydroxysteroid dehydrogenase type 7.